Consider the following 141-residue polypeptide: Large ribosomal subunit protein uL16 (141 aa).

The protein belongs to the universal ribosomal protein uL16 family. Part of the 50S ribosomal subunit. Contacts the CTC protein (RL25).

Functionally, binds the 5S and 23S rRNAs and is also seen to make contacts with the A and P site tRNAs. Interacts with A site tRNA mimics, and is probably one of the key factors, along with a helix of the 23S rRNA, in positioning tRNA stems in the peptidyl-transferase center. The polypeptide is Large ribosomal subunit protein uL16 (rplP) (Deinococcus radiodurans (strain ATCC 13939 / DSM 20539 / JCM 16871 / CCUG 27074 / LMG 4051 / NBRC 15346 / NCIMB 9279 / VKM B-1422 / R1)).